We begin with the raw amino-acid sequence, 88 residues long: Putative membrane protein insertion efficiency factor (88 aa).

It belongs to the UPF0161 family.

It is found in the cell inner membrane. Functionally, could be involved in insertion of integral membrane proteins into the membrane. The chain is Putative membrane protein insertion efficiency factor from Synechococcus sp. (strain CC9311).